The sequence spans 503 residues: GMP synthase [glutamine-hydrolyzing] (503 aa).

The 187-residue stretch at 3 to 189 folds into the Glutamine amidotransferase type-1 domain; that stretch reads PVLVVDFGSQ…AFLSSFAAPN (187 aa). Residue C80 is the Nucleophile of the active site. Residues H165 and E167 contribute to the active site. One can recognise a GMPS ATP-PPase domain in the interval 190 to 380; the sequence is WDPEQTICGT…LGIPKHIVHR (191 aa). Position 217–223 (217–223) interacts with ATP; that stretch reads SGGVDSV.

As to quaternary structure, homodimer.

The enzyme catalyses XMP + L-glutamine + ATP + H2O = GMP + L-glutamate + AMP + diphosphate + 2 H(+). The protein operates within purine metabolism; GMP biosynthesis; GMP from XMP (L-Gln route): step 1/1. In terms of biological role, catalyzes the synthesis of GMP from XMP. The sequence is that of GMP synthase [glutamine-hydrolyzing] from Tropheryma whipplei (strain TW08/27) (Whipple's bacillus).